Reading from the N-terminus, the 691-residue chain is DNA ligase (691 aa).

NAD(+)-binding positions include 41–45, 90–91, and Glu-130; these read DAEYD and SL. Lys-132 acts as the N6-AMP-lysine intermediate in catalysis. NAD(+)-binding residues include Arg-153, Glu-190, Lys-307, and Lys-331. Zn(2+) is bound by residues Cys-425, Cys-428, Cys-443, and Cys-449. In terms of domain architecture, BRCT spans 610 to 691; the sequence is APQGVLAGKT…MHTLLEGHAR (82 aa).

It belongs to the NAD-dependent DNA ligase family. LigA subfamily. Requires Mg(2+) as cofactor. The cofactor is Mn(2+).

The catalysed reaction is NAD(+) + (deoxyribonucleotide)n-3'-hydroxyl + 5'-phospho-(deoxyribonucleotide)m = (deoxyribonucleotide)n+m + AMP + beta-nicotinamide D-nucleotide.. DNA ligase that catalyzes the formation of phosphodiester linkages between 5'-phosphoryl and 3'-hydroxyl groups in double-stranded DNA using NAD as a coenzyme and as the energy source for the reaction. It is essential for DNA replication and repair of damaged DNA. The chain is DNA ligase from Burkholderia pseudomallei (strain K96243).